We begin with the raw amino-acid sequence, 250 residues long: 5'-nucleotidase SurE (250 aa).

A divalent metal cation contacts are provided by Asp-8, Asp-9, Ser-39, and Asn-91.

Belongs to the SurE nucleotidase family. Requires a divalent metal cation as cofactor.

Its subcellular location is the cytoplasm. It carries out the reaction a ribonucleoside 5'-phosphate + H2O = a ribonucleoside + phosphate. Functionally, nucleotidase that shows phosphatase activity on nucleoside 5'-monophosphates. This Syntrophotalea carbinolica (strain DSM 2380 / NBRC 103641 / GraBd1) (Pelobacter carbinolicus) protein is 5'-nucleotidase SurE.